The chain runs to 399 residues: Glucosamine kinase (399 aa).

Residues Lys98, 149–151 (EYL), and Asp156 contribute to the ATP site. Asp262 provides a ligand contact to D-glucosamine. Mg(2+)-binding residues include Gln267, Asp279, and Asp281. The short motif at 366-381 (QVLREIIYAARHLPRW) is the Substrate specificity determinant motif element. Glu370 contributes to the D-glucosamine binding site.

It belongs to the actinobacterial glucosamine kinase family. In terms of assembly, monomer. Requires Mg(2+) as cofactor.

It carries out the reaction D-glucosamine + ATP = D-glucosamine 6-phosphate + ADP + H(+). Functionally, catalyzes the ATP-dependent phosphorylation of D-glucosamine (GlcN) to D-glucosamine 6-phosphate. May be involved in the phosphorylation of acquired extracellular GlcN derived from the hydrolysis of chitosan, i.e., in the incorporation of exogenous GlcN into the bacterial GlcNAc metabolism. Is unable to phosphorylate maltose. In Mycolicibacterium smegmatis (strain ATCC 700084 / mc(2)155) (Mycobacterium smegmatis), this protein is Glucosamine kinase.